The chain runs to 488 residues: Ribulose bisphosphate carboxylase large chain (488 aa).

Asn-127 and Thr-177 together coordinate substrate. The active-site Proton acceptor is the Lys-179. Lys-181 provides a ligand contact to substrate. The Mg(2+) site is built by Lys-205, Asp-207, and Glu-208. Lys-205 is modified (N6-carboxylysine). His-297 acts as the Proton acceptor in catalysis. Residues Arg-298, His-330, and Ser-382 each coordinate substrate.

Belongs to the RuBisCO large chain family. Type I subfamily. As to quaternary structure, heterohexadecamer of 8 large chains and 8 small chains. Mg(2+) serves as cofactor.

It localises to the plastid. It is found in the chloroplast. The catalysed reaction is 2 (2R)-3-phosphoglycerate + 2 H(+) = D-ribulose 1,5-bisphosphate + CO2 + H2O. The enzyme catalyses D-ribulose 1,5-bisphosphate + O2 = 2-phosphoglycolate + (2R)-3-phosphoglycerate + 2 H(+). Its function is as follows. RuBisCO catalyzes two reactions: the carboxylation of D-ribulose 1,5-bisphosphate, the primary event in carbon dioxide fixation, as well as the oxidative fragmentation of the pentose substrate in the photorespiration process. Both reactions occur simultaneously and in competition at the same active site. In Chrysotila carterae (Marine alga), this protein is Ribulose bisphosphate carboxylase large chain.